The primary structure comprises 144 residues: Protein D (144 aa).

The sequence is that of Protein D (D) from Escherichia coli.